Consider the following 317-residue polypeptide: Integrin-binding sialoprotein (317 aa).

The N-terminal stretch at 1 to 16 (MKTALILLSILGMACA) is a signal peptide. A phosphoserine mark is found at Ser-31, Ser-67, Ser-74, Ser-75, Ser-94, and Ser-100. A disordered region spans residues 58–254 (FPVQGSSDSS…RTTSPPFGKT (197 aa)). Residues 66 to 102 (SSEENGDDSSEEEEEEEETSNEGENNEESNEDEDSEA) show a composition bias toward acidic residues. Asn-104 carries N-linked (GlcNAc...) asparagine glycosylation. Residues Thr-119 and Thr-122 are each glycosylated (O-linked (GalNAc...) threonine). A Phosphoserine modification is found at Ser-149. Residues 149–173 (SDEEEEEEEEGNENEESEAEVDENE) show a composition bias toward acidic residues. 3 N-linked (GlcNAc...) asparagine glycosylation sites follow: Asn-177, Asn-182, and Asn-190. Residues 222–232 (KGTSKTTTSPN) show a composition bias toward polar residues. O-linked (GalNAc...) threonine glycosylation is found at Thr-227, Thr-228, Thr-229, Thr-238, and Thr-239. Phosphoserine is present on Ser-280. The short motif at 286-288 (RGD) is the Integrin-binding motif element. Sulfotyrosine occurs at positions 313 and 314.

As to quaternary structure, monomer. Interacts with integrins; the interaction promotes cell adhesion. Post-translationally, N-glycosylated; glycans consist of sialylated and core-fucosylated bi-, tri- and tetraantennary chains. O-glycosylated at eight sites; mucin-type glycans contain Gal, GlcNAc, GalNAc and terminal NeuAc. As to expression, expressed in bone (at protein level). Expressed in trophoblast cells of placenta (at protein level). Expressed in brain.

Its subcellular location is the secreted. Binds tightly to hydroxyapatite. Appears to form an integral part of the mineralized matrix. Probably important to cell-matrix interaction. Promotes adhesion and migration of various cells via the alpha-V/beta-3 integrin receptor (ITGAV:ITGB3). In Homo sapiens (Human), this protein is Integrin-binding sialoprotein (IBSP).